A 159-amino-acid chain; its full sequence is Ribosomal RNA large subunit methyltransferase H (159 aa).

S-adenosyl-L-methionine is bound by residues leucine 76, glycine 108, and 127–132; that span reads FSPMTF.

This sequence belongs to the RNA methyltransferase RlmH family. Homodimer.

It is found in the cytoplasm. It carries out the reaction pseudouridine(1915) in 23S rRNA + S-adenosyl-L-methionine = N(3)-methylpseudouridine(1915) in 23S rRNA + S-adenosyl-L-homocysteine + H(+). Functionally, specifically methylates the pseudouridine at position 1915 (m3Psi1915) in 23S rRNA. The sequence is that of Ribosomal RNA large subunit methyltransferase H from Alkaliphilus oremlandii (strain OhILAs) (Clostridium oremlandii (strain OhILAs)).